We begin with the raw amino-acid sequence, 296 residues long: Stanniocalcin-2 (296 aa).

An N-terminal signal peptide occupies residues 1–24 (MCAERLGQFVTLALVFATLDPARG). The interval 22–44 (ARGTDSTNPPEGPQDRGSQQKGR) is disordered. N-linked (GlcNAc...) asparagine glycosylation occurs at asparagine 73. Positions 236 to 296 (RPYHRDTDHH…EQSEYSDIRR (61 aa)) are disordered. Basic and acidic residues predominate over residues 238-258 (YHRDTDHHLTANRGAKGERGS).

The protein belongs to the stanniocalcin family. Homodimer; disulfide-linked. In terms of tissue distribution, expressed in a variety of tissues. Strongly expressed in ovary and to a lesser extent in kidney.

Its subcellular location is the secreted. In terms of biological role, has an anti-hypocalcemic action on calcium and phosphate homeostasis. This Rattus norvegicus (Rat) protein is Stanniocalcin-2 (Stc2).